Here is a 630-residue protein sequence, read N- to C-terminus: Scarecrow-like protein 34 (630 aa).

A GRAS domain is found at 240–628; sequence KKKKSQVVDF…RTLYASSCWV (389 aa). Residues 247–312 are leucine repeat I (LRI); that stretch reads VDFRTLLTHC…GSTGPMIQTY (66 aa). Residues 331–396 are VHIID; sequence YRVYLSSSPF…DVPRKLRITG (66 aa). The short motif at 362 to 366 is the VHIID element; sequence LHIVD. Positions 412 to 444 are leucine repeat II (LRII); it reads ETGRRLAEYCKRFNVPFEYKAIASQNWETIRIE. A PFYRE region spans residues 454–549; it reads LAVNAGLRLK…REFYGREAMN (96 aa). The SAW stretch occupies residues 552-628; it reads ACEEADRVER…RTLYASSCWV (77 aa).

It belongs to the GRAS family.

The protein localises to the nucleus. Functionally, probable transcription factor involved in plant development. The chain is Scarecrow-like protein 34 (SCL34) from Arabidopsis thaliana (Mouse-ear cress).